The following is a 348-amino-acid chain: Fructose-1,6-bisphosphatase class 1 (348 aa).

Residues E92, D111, L113, and D114 each coordinate Mg(2+). Substrate-binding positions include 114-117 (DGSS) and N204. A Mg(2+)-binding site is contributed by E276.

Belongs to the FBPase class 1 family. Homotetramer. Requires Mg(2+) as cofactor.

It is found in the cytoplasm. It catalyses the reaction beta-D-fructose 1,6-bisphosphate + H2O = beta-D-fructose 6-phosphate + phosphate. The protein operates within carbohydrate biosynthesis; gluconeogenesis. This Methylorubrum extorquens (strain PA1) (Methylobacterium extorquens) protein is Fructose-1,6-bisphosphatase class 1.